The following is a 235-amino-acid chain: Sugar fermentation stimulation protein homolog (235 aa).

Belongs to the SfsA family.

The polypeptide is Sugar fermentation stimulation protein homolog (Alkaliphilus oremlandii (strain OhILAs) (Clostridium oremlandii (strain OhILAs))).